We begin with the raw amino-acid sequence, 273 residues long: Large ribosomal subunit protein uL2 (273 aa).

The disordered stretch occupies residues 228–273 (VDHPHGGGEGKTSGGRHPVTPWGFPTKGKKTRKNKRTSKFIVKKRK). Residues 254–273 (KGKKTRKNKRTSKFIVKKRK) show a composition bias toward basic residues.

The protein belongs to the universal ribosomal protein uL2 family. In terms of assembly, part of the 50S ribosomal subunit. Forms a bridge to the 30S subunit in the 70S ribosome.

One of the primary rRNA binding proteins. Required for association of the 30S and 50S subunits to form the 70S ribosome, for tRNA binding and peptide bond formation. It has been suggested to have peptidyltransferase activity; this is somewhat controversial. Makes several contacts with the 16S rRNA in the 70S ribosome. This Rickettsia felis (strain ATCC VR-1525 / URRWXCal2) (Rickettsia azadi) protein is Large ribosomal subunit protein uL2.